The sequence spans 135 residues: Allatotropins (135 aa).

The signal sequence occupies residues 1 to 22 (MNFSMHLVLAVAAAACLCVVTA). At phenylalanine 51 the chain carries Phenylalanine amide. The propeptide occupies 55 to 135 (DRPHTRAELY…SSEELLRNVA (81 aa)).

As to expression, allatotropin: Expressed in corpora cardiaca (CC), corpora allata (CA), antennal lobe (AL) and gnathal ganglion (GNG) (protein level). Expression in AL detected in all animals, expression in GNG detected in most animals and expression in CA and CC detected in few animals (at protein level). Allatotropin-PP-1: Expressed in corpora cardiaca (CC), corpora allata (CA), antennal lobe (AL) and gnathal ganglion (GNG) (at protein level). Expression in AL detected in all animals and expression in GNG, CA and CC detected in some animals (at protein level).

It is found in the secreted. In terms of biological role, neuropeptide stimulator of juvenile hormone synthesis. This chain is Allatotropins, found in Agrotis ipsilon (Black cutworm moth).